The primary structure comprises 749 residues: Transcription factor RFX3 (749 aa).

A DNA-binding region (RFX-type winged-helix) is located at residues 183–258 (HLQWLLDNYE…YHYYGIRVKP (76 aa)). The interval 663 to 699 (VSPGNLDKDEGSEVESEMDEELDDSSEPQAKREKTEL) is disordered. A compositionally biased stretch (acidic residues) spans 674–688 (SEVESEMDEELDDSS).

The protein belongs to the RFX family. As to quaternary structure, heterodimer; heterodimerizes with RFX1 and RFX2, and RFX6.

It is found in the nucleus. In terms of biological role, transcription factor required for ciliogenesis and islet cell differentiation during endocrine pancreas development. Essential for the differentiation of nodal monocilia and left-right asymmetry specification during embryogenesis. Required for the biogenesis of motile cilia by governing growth and beating efficiency of motile cells. Also required for ciliated ependymal cell differentiation. Regulates the expression of genes involved in ciliary assembly (DYNC2LI1, FOXJ1 and BBS4) and genes involved in ciliary motility (DNAH11, DNAH9 and DNAH5). Together with RFX6, participates in the differentiation of 4 of the 5 islet cell types during endocrine pancreas development, with the exception of pancreatic PP (polypeptide-producing) cells. Regulates transcription by forming a heterodimer with another RFX protein and binding to the X-box in the promoter of target genes. Represses transcription of MAP1A in non-neuronal cells but not in neuronal cells. This chain is Transcription factor RFX3 (RFX3), found in Homo sapiens (Human).